Here is an 89-residue protein sequence, read N- to C-terminus: Small ribosomal subunit protein uS15 (89 aa).

It belongs to the universal ribosomal protein uS15 family. In terms of assembly, part of the 30S ribosomal subunit. Forms a bridge to the 50S subunit in the 70S ribosome, contacting the 23S rRNA.

Functionally, one of the primary rRNA binding proteins, it binds directly to 16S rRNA where it helps nucleate assembly of the platform of the 30S subunit by binding and bridging several RNA helices of the 16S rRNA. Its function is as follows. Forms an intersubunit bridge (bridge B4) with the 23S rRNA of the 50S subunit in the ribosome. In Cereibacter sphaeroides (strain ATCC 17023 / DSM 158 / JCM 6121 / CCUG 31486 / LMG 2827 / NBRC 12203 / NCIMB 8253 / ATH 2.4.1.) (Rhodobacter sphaeroides), this protein is Small ribosomal subunit protein uS15.